Reading from the N-terminus, the 923-residue chain is Phosphoenolpyruvate carboxylase (923 aa).

Residues histidine 149 and lysine 585 contribute to the active site.

It belongs to the PEPCase type 1 family. Mg(2+) is required as a cofactor.

The enzyme catalyses oxaloacetate + phosphate = phosphoenolpyruvate + hydrogencarbonate. In terms of biological role, forms oxaloacetate, a four-carbon dicarboxylic acid source for the tricarboxylic acid cycle. This chain is Phosphoenolpyruvate carboxylase, found in Nocardia farcinica (strain IFM 10152).